Reading from the N-terminus, the 392-residue chain is LL-diaminopimelate aminotransferase (392 aa).

Substrate contacts are provided by Y15, G40, K104, Y128, and N178. Pyridoxal 5'-phosphate is bound by residues 103–104, Y128, N178, Y209, and 237–239; these read SK and SVS. Position 240 is an N6-(pyridoxal phosphate)lysine (K240). Residue R248 participates in pyridoxal 5'-phosphate binding. R366 is a substrate binding site.

Belongs to the class-I pyridoxal-phosphate-dependent aminotransferase family. LL-diaminopimelate aminotransferase subfamily. Homodimer. Requires pyridoxal 5'-phosphate as cofactor.

It catalyses the reaction (2S,6S)-2,6-diaminopimelate + 2-oxoglutarate = (S)-2,3,4,5-tetrahydrodipicolinate + L-glutamate + H2O + H(+). It functions in the pathway amino-acid biosynthesis; L-lysine biosynthesis via DAP pathway; LL-2,6-diaminopimelate from (S)-tetrahydrodipicolinate (aminotransferase route): step 1/1. Functionally, involved in the synthesis of meso-diaminopimelate (m-DAP or DL-DAP), required for both lysine and peptidoglycan biosynthesis. Catalyzes the direct conversion of tetrahydrodipicolinate to LL-diaminopimelate. This is LL-diaminopimelate aminotransferase from Desulforudis audaxviator (strain MP104C).